We begin with the raw amino-acid sequence, 366 residues long: Anhydro-N-acetylmuramic acid kinase (366 aa).

An ATP-binding site is contributed by 15–22; the sequence is GTSLDGVD.

Belongs to the anhydro-N-acetylmuramic acid kinase family.

The catalysed reaction is 1,6-anhydro-N-acetyl-beta-muramate + ATP + H2O = N-acetyl-D-muramate 6-phosphate + ADP + H(+). The protein operates within amino-sugar metabolism; 1,6-anhydro-N-acetylmuramate degradation. Its pathway is cell wall biogenesis; peptidoglycan recycling. Functionally, catalyzes the specific phosphorylation of 1,6-anhydro-N-acetylmuramic acid (anhMurNAc) with the simultaneous cleavage of the 1,6-anhydro ring, generating MurNAc-6-P. Is required for the utilization of anhMurNAc either imported from the medium or derived from its own cell wall murein, and thus plays a role in cell wall recycling. In Hydrogenovibrio crunogenus (strain DSM 25203 / XCL-2) (Thiomicrospira crunogena), this protein is Anhydro-N-acetylmuramic acid kinase.